A 401-amino-acid chain; its full sequence is Propionate kinase (401 aa).

Positions 11 and 18 each coordinate ATP. Asn11 provides a ligand contact to Mg(2+). Arg86 contributes to the substrate binding site. The active-site Proton donor/acceptor is the Asp143. ATP-binding positions include His175, 203–207 (HLGNG), 278–280 (DLR), and 326–330 (GIGEN).

Belongs to the acetokinase family. TdcD subfamily. As to quaternary structure, homodimer. Mg(2+) serves as cofactor.

The catalysed reaction is propanoate + ATP = propanoyl phosphate + ADP. Its pathway is amino-acid degradation; L-threonine degradation via propanoate pathway; propanoate from L-threonine: step 4/4. Its function is as follows. Catalyzes the conversion of propionyl phosphate and ADP to propionate and ATP. This is Propionate kinase from Klebsiella pneumoniae (strain 342).